A 182-amino-acid chain; its full sequence is Small ribosomal subunit protein uS9 (182 aa).

Belongs to the universal ribosomal protein uS9 family.

The chain is Small ribosomal subunit protein uS9 from Corynebacterium efficiens (strain DSM 44549 / YS-314 / AJ 12310 / JCM 11189 / NBRC 100395).